A 544-amino-acid polypeptide reads, in one-letter code: Chaperonin GroEL 1 (544 aa).

ATP contacts are provided by residues 29–32, 86–90, glycine 413, 476–478, and aspartate 492; these read TLGP, DGTTT, and NAA. Residues 523–544 are disordered; the sequence is EPVKAPAGGGDMDGMGGMGGMM. The span at 529–544 shows a compositional bias: gly residues; sequence AGGGDMDGMGGMGGMM.

It belongs to the chaperonin (HSP60) family. Forms a cylinder of 14 subunits composed of two heptameric rings stacked back-to-back. Interacts with the co-chaperonin GroES.

The protein localises to the cytoplasm. The enzyme catalyses ATP + H2O + a folded polypeptide = ADP + phosphate + an unfolded polypeptide.. Functionally, together with its co-chaperonin GroES, plays an essential role in assisting protein folding. The GroEL-GroES system forms a nano-cage that allows encapsulation of the non-native substrate proteins and provides a physical environment optimized to promote and accelerate protein folding. This Cutibacterium acnes (strain DSM 16379 / KPA171202) (Propionibacterium acnes) protein is Chaperonin GroEL 1.